Reading from the N-terminus, the 1400-residue chain is DNA-directed RNA polymerase subunit beta' (1400 aa).

Zn(2+)-binding residues include Cys-71, Cys-73, Cys-86, and Cys-89. Mg(2+)-binding residues include Asp-462, Asp-464, and Asp-466. Zn(2+) contacts are provided by Cys-811, Cys-885, Cys-892, and Cys-895.

Belongs to the RNA polymerase beta' chain family. In terms of assembly, the RNAP catalytic core consists of 2 alpha, 1 beta, 1 beta' and 1 omega subunit. When a sigma factor is associated with the core the holoenzyme is formed, which can initiate transcription. It depends on Mg(2+) as a cofactor. The cofactor is Zn(2+).

It catalyses the reaction RNA(n) + a ribonucleoside 5'-triphosphate = RNA(n+1) + diphosphate. DNA-dependent RNA polymerase catalyzes the transcription of DNA into RNA using the four ribonucleoside triphosphates as substrates. In Brucella suis (strain ATCC 23445 / NCTC 10510), this protein is DNA-directed RNA polymerase subunit beta'.